We begin with the raw amino-acid sequence, 275 residues long: Ribosomal RNA small subunit methyltransferase A (275 aa).

The S-adenosyl-L-methionine site is built by asparagine 19, leucine 21, glycine 46, glutamate 71, aspartate 94, and asparagine 117.

The protein belongs to the class I-like SAM-binding methyltransferase superfamily. rRNA adenine N(6)-methyltransferase family. RsmA subfamily.

It localises to the cytoplasm. It catalyses the reaction adenosine(1518)/adenosine(1519) in 16S rRNA + 4 S-adenosyl-L-methionine = N(6)-dimethyladenosine(1518)/N(6)-dimethyladenosine(1519) in 16S rRNA + 4 S-adenosyl-L-homocysteine + 4 H(+). Its function is as follows. Specifically dimethylates two adjacent adenosines (A1518 and A1519) in the loop of a conserved hairpin near the 3'-end of 16S rRNA in the 30S particle. May play a critical role in biogenesis of 30S subunits. The sequence is that of Ribosomal RNA small subunit methyltransferase A from Burkholderia pseudomallei (strain 668).